Here is a 423-residue protein sequence, read N- to C-terminus: UPF0229 protein PSPPH_0628 (423 aa).

Residues 65–110 (HHGRGGKQTVVHPGNKEFTTGEHIARPQGGGGGKGPGKAGNSGEGM) are disordered. A compositionally biased stretch (gly residues) spans 92–107 (QGGGGGKGPGKAGNSG).

It belongs to the UPF0229 family.

In Pseudomonas savastanoi pv. phaseolicola (strain 1448A / Race 6) (Pseudomonas syringae pv. phaseolicola (strain 1448A / Race 6)), this protein is UPF0229 protein PSPPH_0628.